We begin with the raw amino-acid sequence, 125 residues long: Small ribosomal subunit protein uS12 (125 aa).

Asp89 carries the post-translational modification 3-methylthioaspartic acid. A disordered region spans residues 104–125; it reads LQGVKDRKQSRSKYGSKRPKKA. Basic residues predominate over residues 113–125; sequence SRSKYGSKRPKKA.

Belongs to the universal ribosomal protein uS12 family. As to quaternary structure, part of the 30S ribosomal subunit. Contacts proteins S8 and S17. May interact with IF1 in the 30S initiation complex.

With S4 and S5 plays an important role in translational accuracy. Its function is as follows. Interacts with and stabilizes bases of the 16S rRNA that are involved in tRNA selection in the A site and with the mRNA backbone. Located at the interface of the 30S and 50S subunits, it traverses the body of the 30S subunit contacting proteins on the other side and probably holding the rRNA structure together. The combined cluster of proteins S8, S12 and S17 appears to hold together the shoulder and platform of the 30S subunit. This chain is Small ribosomal subunit protein uS12, found in Leptothrix cholodnii (strain ATCC 51168 / LMG 8142 / SP-6) (Leptothrix discophora (strain SP-6)).